The sequence spans 845 residues: MPLSYQHFRKLLLLDDETEAGPLEEELPRLADADLNRRVAEDLNLGNLNVSIPWTHKVGNFTGLYSSTVPIFNPEWQTPSFPKIHLHEDIANRCQQFVGPLTVNEKRRLKLIMPARFYPNSTKYLPLDKGIKTYYPDHVVNHYFQTRHYLHTLWKAGILYKRETTRSASFCGSPYSWEQELHHGRLVIKTSQRHGDEPFCSQPSGILSRSSVGPCIRSQFKQSRLGLQPHQGPLATSQPGRSGSIWARVHSPTRRCFGVEPSGSGHIGHRASDASSCLHQSAVRKAAYSHLSTSKRQSSSGHAVEFHSFPPSSARSQSQGPVFSCWWLQFRNTQPCSNYCLSHLVNLLEDWGPCTEHGEHHIRIPRTPARVTGGVFLVDKNPHNTAESRLVVDFSQFSRGSTRVSWPKFAVPNLQSLTNLLSSNLSWLSLDVSAAFYHIPLHPAAMPHLLIGSSGLSRYVARLSSNSRINNNQHGTLQNLHDSCSRQLYVSLMLLYKTYGWKLHLYSHPIILGFRKIPMGVGLSPFLLAQFTSAICSVVRRAFPHCLAFSYMDDVVLGAKSVQHLESLYTAVTNFLLSLGIHLNPNKTKRWGYSLNFMGYVIGSWGTLPQDHIVQKIKHCFRKLPVNRPIDWKVCQRLVGLLGFAAPFTQCGYPALMPLYACIQAKQAFTFSPTYKAFLSKQYMNLYPVARQRPGLCQVFADATPTGWGLAIGHQRMRETFVAPLPIHTAELLAACFARSRSGAKLIGTDNSVVLSQKYTSFPWLLGCTANWILRGTSFVYVPSALNPADDPSRGRLGLYRPLLRLPYRPTTGRTSLYAVSPSVPSHLPVRVHFASPLHVAWRPP.

Residues 1–179 (MPLSYQHFRK…FCGSPYSWEQ (179 aa)) are terminal protein domain (TP). The interval 180–348 (ELHHGRLVIK…YCLSHLVNLL (169 aa)) is spacer. Residues 349–692 (EDWGPCTEHG…YMNLYPVARQ (344 aa)) form a polymerase/reverse transcriptase domain (RT) region. A Reverse transcriptase domain is found at 359–602 (EHHIRIPRTP…YSLNFMGYVI (244 aa)). Residues aspartate 431, aspartate 553, and aspartate 554 each coordinate Mg(2+).

The protein belongs to the hepadnaviridae P protein family.

It carries out the reaction DNA(n) + a 2'-deoxyribonucleoside 5'-triphosphate = DNA(n+1) + diphosphate. The catalysed reaction is Endonucleolytic cleavage to 5'-phosphomonoester.. Activated by host HSP70 and HSP40 in vitro to be able to bind the epsilon loop of the pgRNA. Because deletion of the RNase H region renders the protein partly chaperone-independent, the chaperones may be needed indirectly to relieve occlusion of the RNA-binding site by this domain. Inhibited by several reverse-transcriptase inhibitors: Lamivudine, Adefovir and Entecavir. Functionally, multifunctional enzyme that converts the viral RNA genome into dsDNA in viral cytoplasmic capsids. This enzyme displays a DNA polymerase activity that can copy either DNA or RNA templates, and a ribonuclease H (RNase H) activity that cleaves the RNA strand of RNA-DNA heteroduplexes in a partially processive 3'- to 5'-endonucleasic mode. Neo-synthesized pregenomic RNA (pgRNA) are encapsidated together with the P protein, and reverse-transcribed inside the nucleocapsid. Initiation of reverse-transcription occurs first by binding the epsilon loop on the pgRNA genome, and is initiated by protein priming, thereby the 5'-end of (-)DNA is covalently linked to P protein. Partial (+)DNA is synthesized from the (-)DNA template and generates the relaxed circular DNA (RC-DNA) genome. After budding and infection, the RC-DNA migrates in the nucleus, and is converted into a plasmid-like covalently closed circular DNA (cccDNA). The activity of P protein does not seem to be necessary for cccDNA generation, and is presumably released from (+)DNA by host nuclear DNA repair machinery. The protein is Protein P of Homo sapiens (Human).